Reading from the N-terminus, the 513-residue chain is Calcium-binding mitochondrial carrier protein SCaMC-2 (513 aa).

At 1 to 233 (MARPRSLVSP…EKQTGMWWRH (233 aa)) the chain is on the mitochondrial intermembrane side. EF-hand domains follow at residues 55–90 (EHET…LGVH), 91–124 (RTEL…RDHE), 122–157 (DHEK…LGVN), and 158–193 (ISEQ…HPAE). Aspartate 68, asparagine 70, aspartate 72, aspartate 79, aspartate 104, aspartate 106, aspartate 108, glutamine 110, and glutamate 115 together coordinate Ca(2+). Solcar repeat units lie at residues 228–314 (GMWW…MKRI), 322–407 (LGIH…LKNA), and 419–507 (PGVF…LKLT). Residues 234-251 (LVAGGGAGAVSRTCTAPL) form a helical membrane-spanning segment. Topologically, residues 252–288 (DRLKVLMQVHASRSNNMSMLGGFTQMIREGGIRSLWR) are mitochondrial matrix. A helical membrane pass occupies residues 289–308 (GNGINVIKIAPESAIKFMAY). At 309–331 (EQMKRIIGSDQETLGIHERLVAG) the chain is on the mitochondrial intermembrane side. A helical transmembrane segment spans residues 332-345 (SLAGVIAQSSIYPM). At 346–381 (EVLKTRMALRKTGQYQGMLDCGKKILLKEGVSAFYK) the chain is on the mitochondrial matrix side. The chain crosses the membrane as a helical span at residues 382 to 401 (GYVPNMLGIIPYAGIDLAVY). Over 402 to 424 (ETLKNAWLQRYATSSADPGVFVL) the chain is Mitochondrial intermembrane. Residues 425 to 442 (LACGTISSTCGQLASYPL) form a helical membrane-spanning segment. Over 443–481 (ALVRTRMQAEASVEGAPQMTMSKLFKHIVKTEGAFGLYR) the chain is Mitochondrial matrix. The chain crosses the membrane as a helical span at residues 482–501 (GLAPNFMKVIPAVSISYVVY). The Mitochondrial intermembrane segment spans residues 502 to 513 (ENLKLTLGVQSR).

The protein belongs to the mitochondrial carrier (TC 2.A.29) family.

The protein localises to the mitochondrion inner membrane. In terms of biological role, calcium-dependent mitochondrial solute carrier. This is Calcium-binding mitochondrial carrier protein SCaMC-2 (slc25a25) from Xenopus tropicalis (Western clawed frog).